A 347-amino-acid chain; its full sequence is tRNA pseudouridine synthase D (347 aa).

The Nucleophile role is filled by aspartate 81. The TRUD domain maps to 158 to 304; sequence GVPNYFGNQR…MRHDRRAIAL (147 aa).

Belongs to the pseudouridine synthase TruD family.

The enzyme catalyses uridine(13) in tRNA = pseudouridine(13) in tRNA. Its function is as follows. Responsible for synthesis of pseudouridine from uracil-13 in transfer RNAs. This Vibrio vulnificus (strain YJ016) protein is tRNA pseudouridine synthase D.